The sequence spans 554 residues: 3-(3-hydroxy-phenyl)propionate/3-hydroxycinnamic acid hydroxylase (554 aa).

FAD is bound by residues 17 to 46 (QVAIAGAGPVGLMMANYLGQMGIDVLVVEK) and 285 to 295 (FRIDRVLLAGD).

Belongs to the PheA/TfdB FAD monooxygenase family. Requires FAD as cofactor.

It carries out the reaction 3-(3-hydroxyphenyl)propanoate + NADH + O2 + H(+) = 3-(2,3-dihydroxyphenyl)propanoate + NAD(+) + H2O. The catalysed reaction is (2E)-3-(3-hydroxyphenyl)prop-2-enoate + NADH + O2 + H(+) = (2E)-3-(2,3-dihydroxyphenyl)prop-2-enoate + NAD(+) + H2O. Its pathway is aromatic compound metabolism; 3-phenylpropanoate degradation. Its function is as follows. Catalyzes the insertion of one atom of molecular oxygen into position 2 of the phenyl ring of 3-(3-hydroxyphenyl)propionate (3-HPP) and hydroxycinnamic acid (3HCI). The sequence is that of 3-(3-hydroxy-phenyl)propionate/3-hydroxycinnamic acid hydroxylase from Escherichia coli O139:H28 (strain E24377A / ETEC).